The sequence spans 57 residues: UPF0391 membrane protein RPD_3366 (57 aa).

Helical transmembrane passes span 4–24 and 30–50; these read WVVTFLVVALIAGILGFGGIA and IAKVIFFIAVVLFLISAVVGL.

Belongs to the UPF0391 family.

It is found in the cell membrane. This Rhodopseudomonas palustris (strain BisB5) protein is UPF0391 membrane protein RPD_3366.